The sequence spans 614 residues: Probable zinc transporter protein DDB_G0269332 (614 aa).

2 disordered regions span residues 1–103 (MSDI…LPHL) and 115–178 (SSYN…NNEF). At 1 to 203 (MSDINSNSYD…NLNRDSDAKK (203 aa)) the chain is on the cytoplasmic side. Residues 17–64 (QHQQESQYHPQQQQQQQQQQQQQQEYYNQQHQQESQYQQQSPPQQQYD) are compositionally biased toward low complexity. The segment covering 80-92 (GHGRSHNSGHGHS) has biased composition (basic residues). Residues 121–176 (NNSGDISNSNNNNNNNNQYNYNNNNNNNNYNNNINNNQFNSSVYNNNNNNNNNNNN) show a composition bias toward low complexity. Residues 204-224 (LAAWISVMLVFTIYEIFYGAY) form a helical membrane-spanning segment. The Extracellular segment spans residues 225-233 (LESLGLVSD). The helical transmembrane segment at 234 to 254 (GFHALFDCIGMGIALLAMLVG) threads the bilayer. Topologically, residues 255–270 (KRGISNQEYTYGYDRW) are cytoplasmic. Residues 271-291 (EVLGTFSNGCFLLFVSFFLFL) form a helical membrane-spanning segment. Over 292–306 (ESIERLLEPPHIHNH) the chain is Extracellular. A helical membrane pass occupies residues 307–327 (GRVMSLATISLIINIVGVLFF). The Cytoplasmic segment spans residues 328 to 351 (KQKSNERKQQSSIRSENLLTISHH). A helical membrane pass occupies residues 352 to 372 (ILVDSCTSLGVILSSLVGQAF). Topologically, residues 373 to 377 (GLEIS) are extracellular. The helical transmembrane segment at 378 to 398 (DSLISIIIACIIVYNALPICI) threads the bilayer. The Cytoplasmic segment spans residues 399–614 (KTSAILLQTT…NSSHSHAHNH (216 aa)). Residues 483–614 (EGKHNSHSHG…NSSHSHAHNH (132 aa)) are disordered. Composition is skewed to basic residues over residues 487 to 499 (NSHS…HHPH) and 507 to 523 (SHNH…HGHS). Positions 525 to 535 (GGNDDHEHGEN) are enriched in basic and acidic residues. The span at 548–567 (VQPTSPFSSHYTDIHSNNTP) shows a compositional bias: polar residues. Over residues 575-585 (QDDEDDEDDYD) the composition is skewed to acidic residues. Over residues 586–599 (HDEHHHDHDHDEHH) the composition is skewed to basic and acidic residues. A compositionally biased stretch (basic residues) spans 600–614 (HGHSHNSSHSHAHNH).

This sequence belongs to the cation diffusion facilitator (CDF) transporter (TC 2.A.4) family. SLC30A subfamily.

It is found in the membrane. Functionally, may be involved in zinc transport from the cytoplasm to either intracellular organelles or extracellular spaces. The protein is Probable zinc transporter protein DDB_G0269332 of Dictyostelium discoideum (Social amoeba).